A 109-amino-acid polypeptide reads, in one-letter code: Oncomodulin (109 aa).

Position 2 is an N-acetylserine (Ser2). EF-hand domains follow at residues 39 to 74 (MSAS…FQSD) and 78 to 109 (LTES…MVHS). Residues Asp52, Asp54, Ser56, Tyr58, Glu63, Asp91, Asp93, Asp95, Lys97, and Glu102 each coordinate Ca(2+). Residues 82-109 (ETKSLMDAADNDGDGKIGADEFQEMVHS) form a disordered region. Over residues 94–109 (GDGKIGADEFQEMVHS) the composition is skewed to basic and acidic residues.

This sequence belongs to the parvalbumin family. Found in tumor tissues and not detected in normal tissues.

Has some calmodulin-like activity with respect to enzyme activation and growth regulation. Binds two calcium ions. The chain is Oncomodulin (Ocm) from Mus musculus (Mouse).